We begin with the raw amino-acid sequence, 206 residues long: Halorhodopsin (206 aa).

The chain crosses the membrane as a helical span at residues 1-15; that stretch reads IALAGLSILLFVYMG. The Cytoplasmic segment spans residues 16–21; sequence RNVEDP. A helical membrane pass occupies residues 22-45; it reads RAQLIFVATLMVPLVSISSYTGLV. Residues 46-75 lie on the Extracellular side of the membrane; the sequence is SGLTVGFLEMPAGHALAGMGAGPEGGVFTP. The helical transmembrane segment at 76–97 threads the bilayer; sequence WGRYLTWAFSTPMILIALGLLA. At 98–100 the chain is on the cytoplasmic side; sequence GSN. Residues 101 to 124 traverse the membrane as a helical segment; that stretch reads MSKLFTAVVADVGMCITGLAAALT. The Extracellular portion of the chain corresponds to 125 to 127; the sequence is TSS. Residues 128 to 150 form a helical membrane-spanning segment; it reads YLLRWVWYGISCAFFVVVLYILL. Residues 151–162 lie on the Cytoplasmic side of the membrane; that stretch reads AEWAKDAEVAGT. Residues 163–186 form a helical membrane-spanning segment; sequence ADIFNTLKVLTVVLWLGYPIFWAL. The Extracellular portion of the chain corresponds to 187–195; the sequence is GAEGLAVLD. A helical membrane pass occupies residues 196–206; it reads IAITSWAYSGM.

It belongs to the archaeal/bacterial/fungal opsin family.

The protein localises to the cell membrane. Functionally, light-driven chloride pump. The sequence is that of Halorhodopsin (hop) from Halobacterium halobium (strain mex).